We begin with the raw amino-acid sequence, 411 residues long: Putative ion-transport protein YfeO (411 aa).

Transmembrane regions (helical) follow at residues 9 to 29 (MLLLSLPALIIGVASSLVLIA), 54 to 74 (DSPFWIVGMLTLTGIVVGLII), 99 to 119 (ALPGLLLALIIGLAGGVSLGP), 149 to 169 (ILASAGTIGALFGTPVAAALI), 186 to 206 (LFAPLMAAAAGSLTTSLFFHP), 223 to 243 (IASGAIVAAIAIAAGMVAVWC), 258 to 278 (VLILGIGGFILGILGVIGGPL), 296 to 316 (LGAGDYFTLAVVKLAALVIAA), 322 to 342 (GGRIFPAVFIGAALGLMLHAH), 343 to 363 (VEAVPAAITVSCAILGLVLVV), and 386 to 406 (LLCIVMLPAWLLLAGKPLLAA).

Belongs to the chloride channel (TC 2.A.49) family.

The protein resides in the cell membrane. The sequence is that of Putative ion-transport protein YfeO from Salmonella paratyphi A (strain ATCC 9150 / SARB42).